A 218-amino-acid chain; its full sequence is TPA-induced transmembrane protein homolog (218 aa).

The disordered stretch occupies residues 1-54 (MEEGSRSQSPREELELSMLDGPQEELTPLNNDLRIQPNSAEDPSPAQVGKESPW). A helical membrane pass occupies residues 66–86 (KLWMVIVTIFLCFIIVIVISL).

The protein resides in the endoplasmic reticulum membrane. The protein is TPA-induced transmembrane protein homolog of Mus musculus (Mouse).